A 232-amino-acid chain; its full sequence is Enolase-phosphatase E1 (232 aa).

It belongs to the HAD-like hydrolase superfamily. MasA/MtnC family. Monomer. Requires Mg(2+) as cofactor.

The catalysed reaction is 5-methylsulfanyl-2,3-dioxopentyl phosphate + H2O = 1,2-dihydroxy-5-(methylsulfanyl)pent-1-en-3-one + phosphate. It participates in amino-acid biosynthesis; L-methionine biosynthesis via salvage pathway; L-methionine from S-methyl-5-thio-alpha-D-ribose 1-phosphate: step 3/6. Its pathway is amino-acid biosynthesis; L-methionine biosynthesis via salvage pathway; L-methionine from S-methyl-5-thio-alpha-D-ribose 1-phosphate: step 4/6. Its function is as follows. Bifunctional enzyme that catalyzes the enolization of 2,3-diketo-5-methylthiopentyl-1-phosphate (DK-MTP-1-P) into the intermediate 2-hydroxy-3-keto-5-methylthiopentenyl-1-phosphate (HK-MTPenyl-1-P), which is then dephosphorylated to form the acireductone 1,2-dihydroxy-3-keto-5-methylthiopentene (DHK-MTPene). The sequence is that of Enolase-phosphatase E1 from Sorangium cellulosum (strain So ce56) (Polyangium cellulosum (strain So ce56)).